A 138-amino-acid chain; its full sequence is Histone H2AX (138 aa).

The segment at 1 to 23 (MSTTGKGGKAKGKTASSKQVSRS) is disordered. Ser2 is modified (N-acetylserine). Lys6, Lys9, Lys11, Lys13, and Lys18 each carry N6-acetyllysine. Position 123 is a phosphoserine (Ser123). Lys124 participates in a covalent cross-link: Glycyl lysine isopeptide (Lys-Gly) (interchain with G-Cter in ubiquitin). Phosphoserine occurs at positions 125, 130, and 135. Residues 135–136 (SQ) carry the [ST]-Q motif motif.

It belongs to the histone H2A family. As to quaternary structure, the nucleosome is a histone octamer containing two molecules each of H2A, H2B, H3 and H4 assembled in one H3-H4 heterotetramer and two H2A-H2B heterodimers. The octamer wraps approximately 147 bp of DNA. Monoubiquitination of Lys-124 gives a specific tag for epigenetic transcriptional repression. Post-translationally, acetylation occurs almost exclusively in the MAC.

It localises to the nucleus. The protein localises to the chromosome. Functionally, core component of nucleosome. Nucleosomes wrap and compact DNA into chromatin, limiting DNA accessibility to the cellular machineries which require DNA as a template. Histones thereby play a central role in transcription regulation, DNA repair, DNA replication and chromosomal stability. DNA accessibility is regulated via a complex set of post-translational modifications of histones, also called histone code, and nucleosome remodeling. The sequence is that of Histone H2AX (HTA1) from Tetrahymena pyriformis.